The chain runs to 87 residues: Apolipoprotein C-I (87 aa).

Positions 1-26 are cleaved as a signal peptide; that stretch reads MRFILSLPVLAVVLAMVLEGPAPAQA.

It belongs to the apolipoprotein C1 family.

It is found in the secreted. Its function is as follows. Inhibitor of lipoprotein binding to the low density lipoprotein (LDL) receptor, LDL receptor-related protein, and very low density lipoprotein (VLDL) receptor. Associates with high density lipoproteins (HDL) and the triacylglycerol-rich lipoproteins in the plasma and makes up about 10% of the protein of the VLDL and 2% of that of HDL. Appears to interfere directly with fatty acid uptake and is also the major plasma inhibitor of cholesteryl ester transfer protein (CETP). Binds free fatty acids and reduces their intracellular esterification. Modulates the interaction of APOE with beta-migrating VLDL and inhibits binding of beta-VLDL to the LDL receptor-related protein. This Pteropus alecto (Black flying fox) protein is Apolipoprotein C-I (APOC1).